The sequence spans 346 residues: N-acetyl-gamma-glutamyl-phosphate reductase (346 aa).

C150 is a catalytic residue.

It belongs to the NAGSA dehydrogenase family. Type 1 subfamily.

The protein localises to the cytoplasm. The enzyme catalyses N-acetyl-L-glutamate 5-semialdehyde + phosphate + NADP(+) = N-acetyl-L-glutamyl 5-phosphate + NADPH + H(+). Its pathway is amino-acid biosynthesis; L-arginine biosynthesis; N(2)-acetyl-L-ornithine from L-glutamate: step 3/4. Its function is as follows. Catalyzes the NADPH-dependent reduction of N-acetyl-5-glutamyl phosphate to yield N-acetyl-L-glutamate 5-semialdehyde. This Acetivibrio thermocellus (strain ATCC 27405 / DSM 1237 / JCM 9322 / NBRC 103400 / NCIMB 10682 / NRRL B-4536 / VPI 7372) (Clostridium thermocellum) protein is N-acetyl-gamma-glutamyl-phosphate reductase.